The chain runs to 1183 residues: SR-related and CTD-associated factor 4 (1183 aa).

A CID domain is found at 1–139; the sequence is MDAVNAFNQE…PLLDMAAGTS (139 aa). N6-acetyllysine is present on Lys-49. Residue Ser-154 is modified to Phosphoserine. Disordered stretches follow at residues 299–324 and 348–561; these read VPVP…VQQP and HHQV…QIKS. Positions 367-380 are enriched in pro residues; sequence APPPFPPMPQPGMP. Residues 381–398 show a composition bias toward low complexity; the sequence is QPGMAQPGLAQPGMAQPT. The span at 399 to 410 shows a compositional bias: pro residues; that stretch reads MPQPGMPQPGMP. The segment covering 411 to 428 has biased composition (low complexity); it reads QPGMAQPGLAQPGMAQPG. The segment covering 429-440 has biased composition (pro residues); it reads MPQPAMPQPAMP. The segment covering 457 to 469 has biased composition (polar residues); it reads PTFQSTFQPQNEP. A compositionally biased stretch (basic and acidic residues) spans 488–498; that stretch reads EVKRHVPESRK. Positions 499 to 536 are enriched in basic residues; it reads SRSRSPKRRRSRSGSRSRRSRHRRSRSRSRDRRRHSPR. Over residues 538–553 the composition is skewed to basic and acidic residues; that stretch reads RSQERRDREKERERRQ. Positions 569–643 constitute an RRM domain; that stretch reads TTLWVGQLDK…KSIKIAWALN (75 aa). Disordered regions lie at residues 691 to 722, 800 to 858, and 920 to 1183; these read WKGI…IPKP, LPPG…SLPT, and MPPH…EPPR. Position 717 is a phosphoserine (Ser-717). 2 stretches are compositionally biased toward pro residues: residues 800–823 and 920–952; these read LPPG…PPIS and MPPH…PPHG. Positions 1006–1020 are enriched in low complexity; it reads SPSQQPAPAQQQPPQ. Ser-1042 is subject to Phosphoserine. A compositionally biased stretch (basic and acidic residues) spans 1047 to 1122; that stretch reads VENDRERYGS…NRKEKHEVAD (76 aa). Residues 1136–1145 are compositionally biased toward polar residues; that stretch reads QVGTIDTVSE.

Interacts with POLR2A; via C-terminal heptapeptide repeat domain (CTD) phosphorylated at 'Ser-2' and 'Ser-5'.

It localises to the nucleus. Its function is as follows. Anti-terminator protein required to prevent early mRNA termination during transcription. Together with SCAF8, acts by suppressing the use of early, alternative poly(A) sites, thereby preventing the accumulation of non-functional truncated proteins. Mechanistically, associates with the phosphorylated C-terminal heptapeptide repeat domain (CTD) of the largest RNA polymerase II subunit (POLR2A), and subsequently binds nascent RNA upstream of early polyadenylation sites to prevent premature mRNA transcript cleavage and polyadenylation. Independently of SCAF8, also acts as a suppressor of transcriptional readthrough. This Mus musculus (Mouse) protein is SR-related and CTD-associated factor 4.